The primary structure comprises 429 residues: UDP-N-acetylglucosamine 1-carboxyvinyltransferase (429 aa).

Phosphoenolpyruvate is bound at residue 22–23 (KN). Position 102 (arginine 102) interacts with UDP-N-acetyl-alpha-D-glucosamine. Cysteine 126 acts as the Proton donor in catalysis. 2-(S-cysteinyl)pyruvic acid O-phosphothioketal is present on cysteine 126. Residues 131–135 (RPVDL), aspartate 316, and isoleucine 338 each bind UDP-N-acetyl-alpha-D-glucosamine.

It belongs to the EPSP synthase family. MurA subfamily.

Its subcellular location is the cytoplasm. It catalyses the reaction phosphoenolpyruvate + UDP-N-acetyl-alpha-D-glucosamine = UDP-N-acetyl-3-O-(1-carboxyvinyl)-alpha-D-glucosamine + phosphate. Its pathway is cell wall biogenesis; peptidoglycan biosynthesis. In terms of biological role, cell wall formation. Adds enolpyruvyl to UDP-N-acetylglucosamine. The polypeptide is UDP-N-acetylglucosamine 1-carboxyvinyltransferase (Methylorubrum populi (strain ATCC BAA-705 / NCIMB 13946 / BJ001) (Methylobacterium populi)).